The primary structure comprises 483 residues: Glycogen synthase (483 aa).

Residue Lys-18 coordinates ADP-alpha-D-glucose.

Belongs to the glycosyltransferase 1 family. Bacterial/plant glycogen synthase subfamily.

The catalysed reaction is [(1-&gt;4)-alpha-D-glucosyl](n) + ADP-alpha-D-glucose = [(1-&gt;4)-alpha-D-glucosyl](n+1) + ADP + H(+). It functions in the pathway glycan biosynthesis; glycogen biosynthesis. Synthesizes alpha-1,4-glucan chains using ADP-glucose. The sequence is that of Glycogen synthase from Methylocella silvestris (strain DSM 15510 / CIP 108128 / LMG 27833 / NCIMB 13906 / BL2).